The sequence spans 1802 residues: Protein TIC 214 (1802 aa).

6 helical membrane passes run 19–39 (IINS…FSIG), 68–88 (FIAG…HLAL), 91–111 (PHTI…WNNH), 133–153 (VFLN…SSML), 176–196 (VGWL…LVWI), and 227–247 (IFSI…PSPI).

Belongs to the TIC214 family. As to quaternary structure, part of the Tic complex.

The protein localises to the plastid. The protein resides in the chloroplast inner membrane. Its function is as follows. Involved in protein precursor import into chloroplasts. May be part of an intermediate translocation complex acting as a protein-conducting channel at the inner envelope. This chain is Protein TIC 214, found in Nasturtium officinale (Watercress).